The following is a 347-amino-acid chain: Ketol-acid reductoisomerase (NADP(+)) (347 aa).

The KARI N-terminal Rossmann domain maps to methionine 1–threonine 185. Residues tyrosine 24–glutamine 27, arginine 47, serine 50, serine 52, and aspartate 82–glutamine 85 each bind NADP(+). The active site involves histidine 107. Glycine 133 provides a ligand contact to NADP(+). Positions serine 186–leucine 336 constitute a KARI C-terminal knotted domain. Residues aspartate 194, glutamate 198, glutamate 230, and glutamate 234 each coordinate Mg(2+). Substrate is bound at residue serine 255.

It belongs to the ketol-acid reductoisomerase family. Mg(2+) is required as a cofactor.

The catalysed reaction is (2R)-2,3-dihydroxy-3-methylbutanoate + NADP(+) = (2S)-2-acetolactate + NADPH + H(+). It catalyses the reaction (2R,3R)-2,3-dihydroxy-3-methylpentanoate + NADP(+) = (S)-2-ethyl-2-hydroxy-3-oxobutanoate + NADPH + H(+). It participates in amino-acid biosynthesis; L-isoleucine biosynthesis; L-isoleucine from 2-oxobutanoate: step 2/4. Its pathway is amino-acid biosynthesis; L-valine biosynthesis; L-valine from pyruvate: step 2/4. Its function is as follows. Involved in the biosynthesis of branched-chain amino acids (BCAA). Catalyzes an alkyl-migration followed by a ketol-acid reduction of (S)-2-acetolactate (S2AL) to yield (R)-2,3-dihydroxy-isovalerate. In the isomerase reaction, S2AL is rearranged via a Mg-dependent methyl migration to produce 3-hydroxy-3-methyl-2-ketobutyrate (HMKB). In the reductase reaction, this 2-ketoacid undergoes a metal-dependent reduction by NADPH to yield (R)-2,3-dihydroxy-isovalerate. The chain is Ketol-acid reductoisomerase (NADP(+)) from Gamma-proteobacterium EBAC31A08.